A 542-amino-acid chain; its full sequence is Chaperonin GroEL (542 aa).

ATP is bound by residues 29-32, 86-90, Gly413, 476-478, and Asp492; these read TLGP, DGTTT, and NAA.

It belongs to the chaperonin (HSP60) family. In terms of assembly, forms a cylinder of 14 subunits composed of two heptameric rings stacked back-to-back. Interacts with the co-chaperonin GroES.

Its subcellular location is the cytoplasm. It catalyses the reaction ATP + H2O + a folded polypeptide = ADP + phosphate + an unfolded polypeptide.. Its function is as follows. Together with its co-chaperonin GroES, plays an essential role in assisting protein folding. The GroEL-GroES system forms a nano-cage that allows encapsulation of the non-native substrate proteins and provides a physical environment optimized to promote and accelerate protein folding. In Bacillus cytotoxicus (strain DSM 22905 / CIP 110041 / 391-98 / NVH 391-98), this protein is Chaperonin GroEL.